Reading from the N-terminus, the 492-residue chain is MSLKLHNTLGNKKEEFIPIHEGKAGVYGCGPTVYDYAHIGNLRTYVFQDILVKTLRFLGYDVTHVMNITDVGHLTDDEDSGEDKMVKSAEERGKSVLEIAEFYTKAFFNDTERLNIERPGIVCKATEHINEMIELIKRIEANGHTYMAGGNLYYDISTFPKYGELANINLEDLKAGARIEIDKNKRNPHDFVLWFTKSKFENQALVWDSPWGRGYPGWHIECSAMSMKYLGEQIDIHKGGIDHIRVHHTNEIAQSEGATGKKWVNYWLHNEFLVMNKGKMSKSAGSFIILEDVINKGFSALDYRFLLLGGHYRSQLTFSWEAMETAKNGRKNLNNRVAKWLDGLSDSEIMEYAALTENLNLKSAKDMIKNEKARSCFDNFIAAMEDDLSTPKALSELQLLIKEKDIPQKDVLTVLAAMDSILGIKLIEESFNTLKDKGSIEIDESEILKLIEERASAKLDKNYKLADEIRDKLKGMGIILEDQAGKTTWKKL.

Position 29 (C29) interacts with Zn(2+). A 'HIGH' region motif is present at residues 31–41 (PTVYDYAHIGN). Zn(2+) contacts are provided by C222, H247, and E251. The 'KMSKS' region motif lies at 279–283 (KMSKS). K282 is a binding site for ATP.

Belongs to the class-I aminoacyl-tRNA synthetase family. As to quaternary structure, monomer. The cofactor is Zn(2+).

The protein resides in the cytoplasm. It carries out the reaction tRNA(Cys) + L-cysteine + ATP = L-cysteinyl-tRNA(Cys) + AMP + diphosphate. The chain is Cysteine--tRNA ligase from Treponema denticola (strain ATCC 35405 / DSM 14222 / CIP 103919 / JCM 8153 / KCTC 15104).